The sequence spans 96 residues: Co-chaperonin GroES (96 aa).

The protein belongs to the GroES chaperonin family. As to quaternary structure, heptamer of 7 subunits arranged in a ring. Interacts with the chaperonin GroEL.

Its subcellular location is the cytoplasm. In terms of biological role, together with the chaperonin GroEL, plays an essential role in assisting protein folding. The GroEL-GroES system forms a nano-cage that allows encapsulation of the non-native substrate proteins and provides a physical environment optimized to promote and accelerate protein folding. GroES binds to the apical surface of the GroEL ring, thereby capping the opening of the GroEL channel. This Legionella micdadei (Tatlockia micdadei) protein is Co-chaperonin GroES.